We begin with the raw amino-acid sequence, 155 residues long: Aspartate 1-decarboxylase (155 aa).

Serine 24 (schiff-base intermediate with substrate; via pyruvic acid) is an active-site residue. Residue serine 24 is modified to Pyruvic acid (Ser). Threonine 56 contributes to the substrate binding site. Tyrosine 57 acts as the Proton donor in catalysis. Glycine 72–alanine 74 provides a ligand contact to substrate.

It belongs to the PanD family. In terms of assembly, heterooctamer of four alpha and four beta subunits. Pyruvate is required as a cofactor. Is synthesized initially as an inactive proenzyme, which is activated by self-cleavage at a specific serine bond to produce a beta-subunit with a hydroxyl group at its C-terminus and an alpha-subunit with a pyruvoyl group at its N-terminus.

Its subcellular location is the cytoplasm. The enzyme catalyses L-aspartate + H(+) = beta-alanine + CO2. It participates in cofactor biosynthesis; (R)-pantothenate biosynthesis; beta-alanine from L-aspartate: step 1/1. Its function is as follows. Catalyzes the pyruvoyl-dependent decarboxylation of aspartate to produce beta-alanine. In Agrobacterium fabrum (strain C58 / ATCC 33970) (Agrobacterium tumefaciens (strain C58)), this protein is Aspartate 1-decarboxylase.